Reading from the N-terminus, the 459-residue chain is Mitochondrial distribution and morphology protein 34 (459 aa).

The SMP-LTD domain maps to 1–190 (MSFRFNEAVF…LPSLIFNTSQ (190 aa)). Residues 338–347 (RSNSNDDNAK) are compositionally biased toward basic and acidic residues. Residues 338 to 375 (RSNSNDDNAKPRRRKIKCKKTRTPSNLQSQGEQAVDDS) are disordered. The segment covering 348 to 359 (PRRRKIKCKKTR) has biased composition (basic residues).

This sequence belongs to the MDM34 family. Component of the ER-mitochondria encounter structure (ERMES) or MDM complex, composed of MMM1, MDM10, MDM12 and MDM34. Ubiquitinated by a SCF (SKP1-CUL1-F-box protein) E3 ubiquitin-protein ligase complex containing the F-box protein MDM30. Ubiquitination is important for mitochondrial integrity.

The protein resides in the mitochondrion outer membrane. Functionally, component of the ERMES/MDM complex, which serves as a molecular tether to connect the endoplasmic reticulum (ER) and mitochondria. Components of this complex are involved in the control of mitochondrial shape and protein biogenesis, and function in nonvesicular lipid trafficking between the ER and mitochondria. MDM34 is required for the interaction of the ER-resident membrane protein MMM1 and the outer mitochondrial membrane-resident beta-barrel protein MDM10. The sequence is that of Mitochondrial distribution and morphology protein 34 from Saccharomyces cerevisiae (strain RM11-1a) (Baker's yeast).